Consider the following 569-residue polypeptide: Arginine--tRNA ligase (569 aa).

Residues 123–133 (PNIAKRMHIGH) carry the 'HIGH' region motif.

The protein belongs to the class-I aminoacyl-tRNA synthetase family. As to quaternary structure, monomer.

The protein resides in the cytoplasm. It catalyses the reaction tRNA(Arg) + L-arginine + ATP = L-arginyl-tRNA(Arg) + AMP + diphosphate. The polypeptide is Arginine--tRNA ligase (Fusobacterium nucleatum subsp. nucleatum (strain ATCC 25586 / DSM 15643 / BCRC 10681 / CIP 101130 / JCM 8532 / KCTC 2640 / LMG 13131 / VPI 4355)).